The following is a 92-amino-acid chain: Small ribosomal subunit protein uS17 (92 aa).

Belongs to the universal ribosomal protein uS17 family. As to quaternary structure, part of the 30S ribosomal subunit.

One of the primary rRNA binding proteins, it binds specifically to the 5'-end of 16S ribosomal RNA. The chain is Small ribosomal subunit protein uS17 from Wigglesworthia glossinidia brevipalpis.